Consider the following 410-residue polypeptide: DNA primase small subunit (410 aa).

Active-site residues include E43, D106, and D108. Residues 118–129 (CCKDATVCPKCW) carry the Zinc knuckle motif motif.

It belongs to the eukaryotic-type primase small subunit family. As to quaternary structure, heterodimer of a small subunit and a large subunit.

Functionally, DNA primase is the polymerase that synthesizes small RNA primers for the Okazaki fragments made during discontinuous DNA replication. In Caenorhabditis elegans, this protein is DNA primase small subunit (pri-1).